The chain runs to 457 residues: Phosphoglucosamine mutase (457 aa).

The Phosphoserine intermediate role is filled by S103. Positions 103, 245, 247, and 249 each coordinate Mg(2+). S103 is modified (phosphoserine).

Belongs to the phosphohexose mutase family. Requires Mg(2+) as cofactor. Activated by phosphorylation.

It catalyses the reaction alpha-D-glucosamine 1-phosphate = D-glucosamine 6-phosphate. Its function is as follows. Catalyzes the conversion of glucosamine-6-phosphate to glucosamine-1-phosphate. The chain is Phosphoglucosamine mutase from Syntrophotalea carbinolica (strain DSM 2380 / NBRC 103641 / GraBd1) (Pelobacter carbinolicus).